The sequence spans 362 residues: Probable cinnamyl alcohol dehydrogenase 8D (362 aa).

Residue Cys-45 coordinates Zn(2+). Thr-47 provides a ligand contact to NADP(+). Residues His-67, Glu-68, Cys-98, Cys-101, Cys-104, Cys-112, and Cys-161 each contribute to the Zn(2+) site. NADP(+) contacts are provided by residues Thr-165, 186–191 (GLGGLG), 209–214 (SSSPAK), Thr-249, Gly-273, and 296–298 (NGV).

The protein belongs to the zinc-containing alcohol dehydrogenase family. As to quaternary structure, homodimer. Zn(2+) is required as a cofactor.

It carries out the reaction (E)-cinnamyl alcohol + NADP(+) = (E)-cinnamaldehyde + NADPH + H(+). The enzyme catalyses (E)-coniferol + NADP(+) = (E)-coniferaldehyde + NADPH + H(+). The catalysed reaction is (E)-sinapyl alcohol + NADP(+) = (E)-sinapaldehyde + NADPH + H(+). It catalyses the reaction (E)-4-coumaroyl alcohol + NADP(+) = (E)-4-coumaraldehyde + NADPH + H(+). It carries out the reaction (E)-caffeyl alcohol + NADP(+) = (E)-caffeyl aldehyde + NADPH + H(+). Its pathway is aromatic compound metabolism; phenylpropanoid biosynthesis. Functionally, involved in lignin biosynthesis. Catalyzes the final step specific for the production of lignin monomers. Catalyzes the NADPH-dependent reduction of coniferaldehyde, 5-hydroxyconiferaldehyde, sinapaldehyde, 4-coumaraldehyde and caffeyl aldehyde to their respective alcohols. The sequence is that of Probable cinnamyl alcohol dehydrogenase 8D from Oryza sativa subsp. japonica (Rice).